Reading from the N-terminus, the 128-residue chain is Nitrogen fixation nifHD region GlnB-like protein 2 (128 aa).

Belongs to the P(II) protein family.

Could be involved in the regulation of nitrogen fixation. This chain is Nitrogen fixation nifHD region GlnB-like protein 2 (glnBB), found in Methanothermococcus thermolithotrophicus (Methanococcus thermolithotrophicus).